Here is a 238-residue protein sequence, read N- to C-terminus: MIAFIVLLSLAAVLQQSSGTVDFASESSNKRENQKQIVDKHNALRRSVRPTARNMLQMEWNSNAAQNAKRWADRCSFAHSPPHLRTVGKIGCGENLFMSSQPYAWSRVIQSWYDENKKFVYGVGANPPGSVIGHYTQIVWYNSHLLGCGAAKCSSSKYLYVCQYCPAGNIIGSIATPYKSGPPCGDCPSACVNGLCTNPCKHHNVFSNCQSLAKQNACQTEWMKSKCAASCFCRTEII.

A signal peptide spans 1–19; the sequence is MIAFIVLLSLAAVLQQSSG. The propeptide occupies 20 to 25; the sequence is TVDFAS. An SCP domain is found at 38 to 164; that stretch reads VDKHNALRRS…SSKYLYVCQY (127 aa). Disulfide bonds link cysteine 75-cysteine 153, cysteine 92-cysteine 165, cysteine 148-cysteine 162, cysteine 184-cysteine 191, cysteine 187-cysteine 196, cysteine 200-cysteine 233, cysteine 209-cysteine 227, and cysteine 218-cysteine 231. The region spanning 200–233 is the ShKT domain; the sequence is CKHHNVFSNCQSLAKQNACQTEWMKSKCAASCFC.

As to expression, expressed by the venom gland.

It is found in the secreted. This is Cysteine-rich venom protein kaouthin-2 from Naja kaouthia (Monocled cobra).